Here is a 258-residue protein sequence, read N- to C-terminus: Small ribosomal subunit protein uS2 (258 aa).

It belongs to the universal ribosomal protein uS2 family.

This chain is Small ribosomal subunit protein uS2, found in Streptococcus suis (strain 98HAH33).